The chain runs to 173 residues: Crossover junction endodeoxyribonuclease RuvC (173 aa).

Active-site residues include Asp8, Glu67, and Asp139. Positions 8, 67, and 139 each coordinate Mg(2+).

It belongs to the RuvC family. Homodimer which binds Holliday junction (HJ) DNA. The HJ becomes 2-fold symmetrical on binding to RuvC with unstacked arms; it has a different conformation from HJ DNA in complex with RuvA. In the full resolvosome a probable DNA-RuvA(4)-RuvB(12)-RuvC(2) complex forms which resolves the HJ. It depends on Mg(2+) as a cofactor.

The protein localises to the cytoplasm. The catalysed reaction is Endonucleolytic cleavage at a junction such as a reciprocal single-stranded crossover between two homologous DNA duplexes (Holliday junction).. The RuvA-RuvB-RuvC complex processes Holliday junction (HJ) DNA during genetic recombination and DNA repair. Endonuclease that resolves HJ intermediates. Cleaves cruciform DNA by making single-stranded nicks across the HJ at symmetrical positions within the homologous arms, yielding a 5'-phosphate and a 3'-hydroxyl group; requires a central core of homology in the junction. The consensus cleavage sequence is 5'-(A/T)TT(C/G)-3'. Cleavage occurs on the 3'-side of the TT dinucleotide at the point of strand exchange. HJ branch migration catalyzed by RuvA-RuvB allows RuvC to scan DNA until it finds its consensus sequence, where it cleaves and resolves the cruciform DNA. This chain is Crossover junction endodeoxyribonuclease RuvC, found in Vibrio campbellii (strain ATCC BAA-1116).